A 306-amino-acid polypeptide reads, in one-letter code: Acetyl-coenzyme A carboxylase carboxyl transferase subunit beta (306 aa).

A CoA carboxyltransferase N-terminal domain is found at 25-294 (LWIKDPTSGE…APEPSHAFSK (270 aa)). The tract at residues 287-306 (EPSHAFSKDSQTQISKTKAA) is disordered. Residues 294–306 (KDSQTQISKTKAA) show a composition bias toward polar residues.

The protein belongs to the AccD/PCCB family. In terms of assembly, acetyl-CoA carboxylase is a heterohexamer composed of biotin carboxyl carrier protein (AccB), biotin carboxylase (AccC) and two subunits each of ACCase subunit alpha (AccA) and ACCase subunit beta (AccD).

The protein localises to the cytoplasm. The enzyme catalyses N(6)-carboxybiotinyl-L-lysyl-[protein] + acetyl-CoA = N(6)-biotinyl-L-lysyl-[protein] + malonyl-CoA. The protein operates within lipid metabolism; malonyl-CoA biosynthesis; malonyl-CoA from acetyl-CoA: step 1/1. In terms of biological role, component of the acetyl coenzyme A carboxylase (ACC) complex. Biotin carboxylase (BC) catalyzes the carboxylation of biotin on its carrier protein (BCCP) and then the CO(2) group is transferred by the transcarboxylase to acetyl-CoA to form malonyl-CoA. This Bartonella bacilliformis (strain ATCC 35685 / KC583 / Herrer 020/F12,63) protein is Acetyl-coenzyme A carboxylase carboxyl transferase subunit beta.